Consider the following 151-residue polypeptide: Deoxyuridine 5'-triphosphate nucleotidohydrolase (151 aa).

Substrate-binding positions include 70–72 (RSG), N83, 87–89 (LID), and M97.

Belongs to the dUTPase family. As to quaternary structure, homotrimer. The cofactor is Mg(2+).

It catalyses the reaction dUTP + H2O = dUMP + diphosphate + H(+). It participates in pyrimidine metabolism; dUMP biosynthesis; dUMP from dCTP (dUTP route): step 2/2. In terms of biological role, this enzyme is involved in nucleotide metabolism: it produces dUMP, the immediate precursor of thymidine nucleotides and it decreases the intracellular concentration of dUTP so that uracil cannot be incorporated into DNA. In Escherichia coli (strain K12 / MC4100 / BW2952), this protein is Deoxyuridine 5'-triphosphate nucleotidohydrolase.